A 135-amino-acid polypeptide reads, in one-letter code: Retinol-binding protein 5 (135 aa).

It belongs to the calycin superfamily. Fatty-acid binding protein (FABP) family.

The protein resides in the cytoplasm. In terms of biological role, intracellular transport of retinol. The polypeptide is Retinol-binding protein 5 (RBP5) (Pongo abelii (Sumatran orangutan)).